Consider the following 114-residue polypeptide: Early 4 ORF4 protein (114 aa).

Residues 66–75 (RAKRRDRRRR) carry the Nuclear localization signal motif.

Belongs to the adenoviridae E4 ORF4 family. In terms of assembly, interacts with host BAZ1A/ACF1, host PPP2R2A/PP2a-B55alpha subunit, and host PPP2R5E/PP2a-B'B56 subunit. May interact with host SRC. In terms of processing, may be phosphorylated by host SRC kinase.

The protein resides in the host nucleus. Its subcellular location is the host cytoplasm. Functionally, plays a role in viral alternative pre-mRNA splicing. Activates dephosphorylation by protein phosphatase 2A of host SR proteins and converts their splicing properties. When expressed alone ex vivo, induces p53/TP53-independent apoptosis called cytoplasmic death. May mimic nutrient/growth signals to activate the host mTOR pathway. This chain is Early 4 ORF4 protein, found in Homo sapiens (Human).